The chain runs to 406 residues: Protein transport protein HofC homolog (406 aa).

3 consecutive transmembrane segments (helical) span residues 167–187, 214–234, and 379–399; these read MVLGISLLLTLALLLFIVPQF, QNIGILLFFVLSFFLFYYFYL, and MMVIIGSLIGIIMMGMYLPIF.

This sequence belongs to the GSP F family.

It localises to the cell inner membrane. The protein is Protein transport protein HofC homolog (hofC) of Haemophilus influenzae (strain ATCC 51907 / DSM 11121 / KW20 / Rd).